Reading from the N-terminus, the 134-residue chain is MAGRGKAIGSSAAKKATSRSSKAGLQFPVGRIARFLKAGKYAERVGAGAPVYLAAVLEYLAAEVLELAGNAARDNKKTRIVPRHIQLAVRNDEELSRLLGAVTIANGGVMPNIHNLLLPKKAGSSAKAAAADDE.

Belongs to the histone H2A family. As to quaternary structure, the nucleosome is a histone octamer containing two molecules each of H2A, H2B, H3 and H4 assembled in one H3-H4 heterotetramer and two H2A-H2B heterodimers. The octamer wraps approximately 147 bp of DNA.

The protein resides in the nucleus. Its subcellular location is the chromosome. Functionally, core component of nucleosome. Nucleosomes wrap and compact DNA into chromatin, limiting DNA accessibility to the cellular machineries which require DNA as a template. Histones thereby play a central role in transcription regulation, DNA repair, DNA replication and chromosomal stability. DNA accessibility is regulated via a complex set of post-translational modifications of histones, also called histone code, and nucleosome remodeling. The polypeptide is Probable histone H2A.3 (Oryza sativa subsp. indica (Rice)).